Reading from the N-terminus, the 1342-residue chain is DNA-directed RNA polymerase subunit beta (1342 aa).

The protein belongs to the RNA polymerase beta chain family. The RNAP catalytic core consists of 2 alpha, 1 beta, 1 beta' and 1 omega subunit. When a sigma factor is associated with the core the holoenzyme is formed, which can initiate transcription.

The enzyme catalyses RNA(n) + a ribonucleoside 5'-triphosphate = RNA(n+1) + diphosphate. Functionally, DNA-dependent RNA polymerase catalyzes the transcription of DNA into RNA using the four ribonucleoside triphosphates as substrates. The sequence is that of DNA-directed RNA polymerase subunit beta from Photorhabdus laumondii subsp. laumondii (strain DSM 15139 / CIP 105565 / TT01) (Photorhabdus luminescens subsp. laumondii).